A 470-amino-acid polypeptide reads, in one-letter code: Regulator of microtubule dynamics protein 3 (470 aa).

Residues 1-12 (MSRLGALGGSRA) lie on the Mitochondrial intermembrane side of the membrane. The chain crosses the membrane as a helical span at residues 13 to 35 (GLGLLLGTAAGLGFLCVLYSQRW). The Cytoplasmic portion of the chain corresponds to 36–470 (KRTQRHGRSH…DLEELEVILG (435 aa)). Residues Ser44, Ser46, Ser50, and Ser57 each carry the phosphoserine modification. Residues 91 to 125 (LDRLDFVLTSLMALRREVEELQRSLQGLAGEIVGE) adopt a coiled-coil conformation. The FFAT signature appears at 157 to 163 (VYFTASS). Thr160 is subject to Phosphothreonine. Residues 168–205 (TDAESEGGYTTANAESDYERDSDKESGDAEDEVSCETV) are disordered. Phosphoserine occurs at positions 183, 193, 212, and 233. Residues 184 to 194 (DYERDSDKESG) show a composition bias toward basic and acidic residues.

Belongs to the RMDN family. As to quaternary structure, interacts with PTPN2. Interacts with microtubules. Interacts with VAPB. Interacts (via FFAT motif) with MOSPD2 (via MSP domain). Interacts (via phosphorylated FFAT motif) with MOSPD2, VAPA and VAPB. Phosphorylation at Thr-160 of the FFAT motif activates interaction with MOSPD2, VAPA and VAPB.

The protein resides in the mitochondrion outer membrane. Its subcellular location is the cytoplasm. It localises to the nucleus. It is found in the cytoskeleton. The protein localises to the spindle. The protein resides in the spindle pole. Involved in cellular calcium homeostasis regulation. May participate in differentiation and apoptosis of keratinocytes. Overexpression induces apoptosis. This Mus musculus (Mouse) protein is Regulator of microtubule dynamics protein 3.